Reading from the N-terminus, the 126-residue chain is Aspartate 1-decarboxylase (126 aa).

The active-site Schiff-base intermediate with substrate; via pyruvic acid is Ser-25. Ser-25 bears the Pyruvic acid (Ser) mark. Residue Thr-57 coordinates substrate. Tyr-58 acts as the Proton donor in catalysis. 73–75 (GAA) contributes to the substrate binding site.

Belongs to the PanD family. Heterooctamer of four alpha and four beta subunits. Requires pyruvate as cofactor. Post-translationally, is synthesized initially as an inactive proenzyme, which is activated by self-cleavage at a specific serine bond to produce a beta-subunit with a hydroxyl group at its C-terminus and an alpha-subunit with a pyruvoyl group at its N-terminus.

It is found in the cytoplasm. The catalysed reaction is L-aspartate + H(+) = beta-alanine + CO2. Its pathway is cofactor biosynthesis; (R)-pantothenate biosynthesis; beta-alanine from L-aspartate: step 1/1. Functionally, catalyzes the pyruvoyl-dependent decarboxylation of aspartate to produce beta-alanine. The sequence is that of Aspartate 1-decarboxylase from Methylococcus capsulatus (strain ATCC 33009 / NCIMB 11132 / Bath).